The chain runs to 338 residues: Glyceraldehyde-3-phosphate dehydrogenase (338 aa).

NAD(+)-binding positions include 11-12 and Gly111; that span reads TI. 140-142 provides a ligand contact to D-glyceraldehyde 3-phosphate; it reads SCN. Cys141 serves as the catalytic Nucleophile. Position 169 (Arg169) interacts with NAD(+). Residue 195-196 coordinates D-glyceraldehyde 3-phosphate; sequence HG. Gln302 provides a ligand contact to NAD(+).

It belongs to the glyceraldehyde-3-phosphate dehydrogenase family. Homotetramer.

It is found in the cytoplasm. The catalysed reaction is D-glyceraldehyde 3-phosphate + phosphate + NADP(+) = (2R)-3-phospho-glyceroyl phosphate + NADPH + H(+). The enzyme catalyses D-glyceraldehyde 3-phosphate + phosphate + NAD(+) = (2R)-3-phospho-glyceroyl phosphate + NADH + H(+). It participates in carbohydrate degradation; glycolysis; pyruvate from D-glyceraldehyde 3-phosphate: step 1/5. The chain is Glyceraldehyde-3-phosphate dehydrogenase (gap) from Methanobacterium formicicum.